Reading from the N-terminus, the 129-residue chain is Acetophenone carboxylase beta subunit (129 aa).

In terms of assembly, acetophenone carboxylase consists of five subunits; a heterooctameric subcomplex of two alpha (Apc1), two beta (Apc2), two gamma (Apc3) and two delta (Apc4) subunits assembles with the epsilon (Apc5) subunit in an unknown stoichiometry. Mg(2+) serves as cofactor. Mn(2+) is required as a cofactor.

Its subcellular location is the cytoplasm. The enzyme catalyses acetophenone + hydrogencarbonate + 2 ATP + H2O = 3-oxo-3-phenylpropanoate + 2 ADP + 2 phosphate + 2 H(+). Its activity is regulated as follows. Inhibited by zinc ions, carbamoylphosphate and beta,gamma-imido-ATP. In terms of biological role, catalyzes the carboxylation of acetophenone to form 3-oxo-3-phenylpropanoate (benzoylacetate) in the anaerobic catabolism of ethylbenzene. Also carboxylates propiophenone at the same rate and 4-acetyl-pyridine at lower rates. In Aromatoleum aromaticum (strain DSM 19018 / LMG 30748 / EbN1) (Azoarcus sp. (strain EbN1)), this protein is Acetophenone carboxylase beta subunit (apc2).